The chain runs to 222 residues: DNA ADP-ribosyl transferase (222 aa).

The 198-residue stretch at threonine 12–tyrosine 209 folds into the DarT domain. NAD(+) contacts are provided by residues histidine 16 to threonine 18, glycine 25, and leucine 33. The interval arginine 38–glutamine 56 is NAD(+)-binding element. The DNA-binding element occupies tyrosine 47–histidine 53. Residue arginine 54 coordinates NAD(+). Arginine 54 serves as the catalytic Proton acceptor. 3 consecutive DNA-binding regions follow at residues arginine 78–tyrosine 83, serine 148–alanine 151, and arginine 154–glutamine 158. The ADP-ribosylating turn-turn loop stretch occupies residues threonine 119–glutamate 160. Residue glutamate 160 is part of the active site.

It belongs to the DarT ADP-ribosyltransferase family. In terms of assembly, interacts with cognate antitoxin DarG (via C-terminus); this heterodimeric complex neutralizes the toxic effect of DarT by preventing ssDNA binding to DarT and consequently inactivating the toxin by direct protein-protein interactions.

The enzyme catalyses a thymidine in DNA + NAD(+) = an N-(ADP-alpha-D-ribosyl)-thymidine in DNA + nicotinamide + H(+). Functionally, toxic component of the hybrid type II/IV toxin-antitoxin (TA) system DarTG, which plays a crucial role in controlling bacterial growth and bacteriophage infection. Its toxic effect is neutralized by cognate antitoxin DarG. In case of phage infection, DarT toxin ADP-ribosylates DNA, which inhibits both viral DNA and RNA synthesis and leads to abortive infection. ADP-ribosylates ssDNA on the second thymidine of the consensus sequence 5'-TNTC-3'; the protein does not auto-modify. Has no activity on dsDNA in vitro. This leads to a decrease in DNA replication. Upon expression in E.coli inhibits cell growth, colony formation and induces the SOS response. Expression leads to bacteriostasis; however if cells grow over an hour in the presence of toxin, growth is no longer restored on antitoxin-inducing plates. In E.coli ADP-ribosylates genomic DNA (gDNA), which induces RecA expression (a marker for DNA damage). The sequence is that of DNA ADP-ribosyl transferase from Thermus aquaticus (strain ATCC BAA-2747 / Y51MC23).